Here is an 859-residue protein sequence, read N- to C-terminus: Volume-regulated anion channel subunit LRRC8D (859 aa).

At 1-22 the chain is on the cytoplasmic side; it reads MFTLAEVASLNDIQPTYRILKP. A helical membrane pass occupies residues 23–48; the sequence is WWDVFMDYLAVVMLMVAIFAGTMQLT. Residues 49–164 lie on the Extracellular side of the membrane; sequence KDQVVCLPVL…YHLALPWYSK (116 aa). A disulfide bridge links Cys54 with Cys355. Residues 110 to 138 form a disordered region; the sequence is IPLQATHPHAESTLPNQEAKKEKRDPTGR. Residues 127 to 138 show a composition bias toward basic and acidic residues; it reads EAKKEKRDPTGR. Residues 165-183 traverse the membrane as a helical segment; that stretch reads YFPYLALIHTIILMVSSNF. Residues 184–309 are Cytoplasmic-facing; sequence WFKYPKTCSK…EDSDLIYKLY (126 aa). The interval 222–252 is disordered; the sequence is SEENKQRITGAQTLPKHVSTSSDEGSPSAST. Positions 228–252 are enriched in polar residues; sequence RITGAQTLPKHVSTSSDEGSPSAST. 3 positions are modified to phosphoserine: Ser242, Ser243, and Ser247. A helical transmembrane segment spans residues 310–331; it reads VVQTLIKTAKFIFILCYTANFV. Over 332–361 the chain is Extracellular; that stretch reads NAISFEHVCKPKVEHLTGYEVFECTHNMAY. Residues 362-387 form a helical membrane-spanning segment; it reads MLKKLLISYISIICVYGFICLYTLFW. The Cytoplasmic portion of the chain corresponds to 388–859; the sequence is LFRIPLKEYS…DVNVPFANGI (472 aa). LRR repeat units lie at residues 515-535, 539-560, 562-583, 590-610, 613-633, 637-658, 660-681, 685-706, 708-729, 731-752, 754-775, 777-798, and 800-821; these read NLQELHLCHCPAKVEQTAFSF, HLRCLHVKFTDVAEIPAWVYLL, NLRELYLIGNLNSENNKMIGLE, HLKILHVKSNLTKVPSNITDV, HLTKLVIHNDGTKLLVLNSLK, NVAELELQNCELERIPHAIFSL, NLQELDLKSNNIRTIEEIISFQ, RLTCLKLWHNKIVAIPPSITHV, NLESLYFSNNKLESLPTAVFSL, KLRCLDVSYNNISTIPIEIGLL, NLQHLHITGNKVDILPKQLFKC, KLRTLNLGQNCIASLPEKISQL, and QLTQLELKGNCLDRLPAQLGQC.

The protein belongs to the LRRC8 family. As to quaternary structure, heterohexamer; oligomerizes with other LRRC8 proteins (LRRC8A, LRRC8B, LRRC8C and/or LRRC8E) to form a heterohexamer. In vivo, the subunit composition may depend primarily on expression levels, and heterooligomeric channels containing various proportions of the different LRRC8 proteins may coexist. As to expression, expressed in pancreatic beta cells. Also expressed in glucagon-secreting pancreatic alpha cells.

It localises to the cell membrane. It is found in the endoplasmic reticulum membrane. It catalyses the reaction chloride(in) = chloride(out). The catalysed reaction is iodide(out) = iodide(in). It carries out the reaction taurine(out) = taurine(in). Functionally, non-essential component of the volume-regulated anion channel (VRAC, also named VSOAC channel), an anion channel required to maintain a constant cell volume in response to extracellular or intracellular osmotic changes. The VRAC channel conducts iodide better than chloride and can also conduct organic osmolytes like taurine. Plays a redundant role in the efflux of amino acids, such as aspartate, in response to osmotic stress family member (LRRC8B, LRRC8C, LRRC8D or LRRC8E); channel characteristics depend on the precise subunit composition. Also acts as a regulator of glucose-sensing in pancreatic beta cells: VRAC currents, generated in response to hypotonicity- or glucose-induced beta cell swelling, depolarize cells, thereby causing electrical excitation, leading to increase glucose sensitivity and insulin secretion. VRAC channels containing LRRC8D inhibit transport of immunoreactive cyclic dinucleotide GMP-AMP (2'-3'-cGAMP), an immune messenger produced in response to DNA virus in the cytosol. The protein is Volume-regulated anion channel subunit LRRC8D of Mus musculus (Mouse).